The sequence spans 335 residues: Probable geranylgeranyl transferase type-2 subunit beta (335 aa).

5 PFTB repeats span residues 74–115 (TEEI…IIFN), 122–163 (ADTI…HLLG), 170–211 (IDSA…AIAG), 218–259 (RDRT…AILG), and 266–312 (SDAM…DDTL). Geranylgeranyl diphosphate is bound by residues 196-198 (HSG) and 238-250 (RPEKLPDVCYSWW). The Zn(2+) site is built by D244, C246, and H296.

It belongs to the protein prenyltransferase subunit beta family. Heterodimer of an alpha and a beta subunit. The cofactor is Zn(2+).

It carries out the reaction geranylgeranyl diphosphate + L-cysteinyl-[protein] = S-geranylgeranyl-L-cysteinyl-[protein] + diphosphate. Functionally, catalyzes the transfer of a geranyl-geranyl moiety from geranyl-geranyl pyrophosphate to both cysteines in Rab proteins with an -XXCC, -XCXC and -CCXX C-terminal. The polypeptide is Probable geranylgeranyl transferase type-2 subunit beta (ggtb-1) (Caenorhabditis elegans).